Here is a 437-residue protein sequence, read N- to C-terminus: tRNA-queuosine alpha-mannosyltransferase (437 aa).

This sequence belongs to the glycosyltransferase group 1 family. Glycosyltransferase 4 subfamily.

It is found in the cytoplasm. It localises to the nucleus. It catalyses the reaction queuosine(34) in tRNA(Asp) + GDP-alpha-D-mannose = O-4''-alpha-D-mannosylqueuosine(34) in tRNA(Asp) + GDP + H(+). Functionally, glycosyltransferase that specifically catalyzes mannosylation of cytoplasmic tRNA(Asp) modified with queuosine at position 34 (queuosine(34)). Mannosylates the cyclopentene moiety of queuosine(34) in tRNA(Asp) to form mannosyl-queuosine(34). Mannosylation of queuosine(34) in tRNA(Asp) is required to slow-down elongation at cognate codons, GAC and GAU, thereby regulating protein translation. The protein is tRNA-queuosine alpha-mannosyltransferase (gtdc1) of Xenopus laevis (African clawed frog).